A 310-amino-acid polypeptide reads, in one-letter code: Tryptophan 2,3-dioxygenase (310 aa).

The segment at 1 to 39 (MQPPGNDAPAGCPFSGARAQGTQAAHEAPHVPGDAGEQA) is disordered. Residues 79–83 (FIIQH), Tyr141, and Arg145 each bind substrate. His268 serves as a coordination point for heme. Thr282 serves as a coordination point for substrate.

Belongs to the tryptophan 2,3-dioxygenase family. In terms of assembly, homotetramer. Heme serves as cofactor.

It carries out the reaction L-tryptophan + O2 = N-formyl-L-kynurenine. Its pathway is amino-acid degradation; L-tryptophan degradation via kynurenine pathway; L-kynurenine from L-tryptophan: step 1/2. In terms of biological role, heme-dependent dioxygenase that catalyzes the oxidative cleavage of the L-tryptophan (L-Trp) pyrrole ring and converts L-tryptophan to N-formyl-L-kynurenine. Catalyzes the oxidative cleavage of the indole moiety. The polypeptide is Tryptophan 2,3-dioxygenase (Burkholderia multivorans (strain ATCC 17616 / 249)).